The chain runs to 217 residues: Large ribosomal subunit protein uL3 (217 aa).

Residues 127-162 (GFSRGPMSHGSKNHRAPGSTGAGTTPGRIYPGKRMA) form a disordered region. Residues 142 to 153 (APGSTGAGTTPG) show a composition bias toward low complexity.

This sequence belongs to the universal ribosomal protein uL3 family. Part of the 50S ribosomal subunit. Forms a cluster with proteins L14 and L19.

One of the primary rRNA binding proteins, it binds directly near the 3'-end of the 23S rRNA, where it nucleates assembly of the 50S subunit. The protein is Large ribosomal subunit protein uL3 of Prochlorococcus marinus (strain AS9601).